Reading from the N-terminus, the 187-residue chain is Large ribosomal subunit protein uL5 (187 aa).

This sequence belongs to the universal ribosomal protein uL5 family. As to quaternary structure, part of the 50S ribosomal subunit; part of the 5S rRNA/L5/L18/L25 subcomplex. Contacts the 5S rRNA and the P site tRNA. Forms a bridge to the 30S subunit in the 70S ribosome.

Functionally, this is one of the proteins that bind and probably mediate the attachment of the 5S RNA into the large ribosomal subunit, where it forms part of the central protuberance. In the 70S ribosome it contacts protein S13 of the 30S subunit (bridge B1b), connecting the 2 subunits; this bridge is implicated in subunit movement. Contacts the P site tRNA; the 5S rRNA and some of its associated proteins might help stabilize positioning of ribosome-bound tRNAs. The chain is Large ribosomal subunit protein uL5 from Roseobacter denitrificans (strain ATCC 33942 / OCh 114) (Erythrobacter sp. (strain OCh 114)).